The following is a 161-amino-acid chain: uncharacterized protein (161 aa).

This is an uncharacterized protein from Encephalitozoon cuniculi (strain GB-M1) (Microsporidian parasite).